Here is a 77-residue protein sequence, read N- to C-terminus: Putative antitoxin MazE7 (77 aa).

A disordered region spans residues 49 to 77; that stretch reads REASHAETTTQAVRDEDREWEGTVGDGLG.

Forms a complex with cognate toxin MazF7.

Antitoxin component of a type II toxin-antitoxin (TA) system. In Mycobacterium tuberculosis (strain CDC 1551 / Oshkosh), this protein is Putative antitoxin MazE7 (mazE7).